The following is a 118-amino-acid chain: Large ribosomal subunit protein uL18 (118 aa).

It belongs to the universal ribosomal protein uL18 family. Part of the 50S ribosomal subunit; part of the 5S rRNA/L5/L18/L25 subcomplex. Contacts the 5S and 23S rRNAs.

Its function is as follows. This is one of the proteins that bind and probably mediate the attachment of the 5S RNA into the large ribosomal subunit, where it forms part of the central protuberance. This Wolinella succinogenes (strain ATCC 29543 / DSM 1740 / CCUG 13145 / JCM 31913 / LMG 7466 / NCTC 11488 / FDC 602W) (Vibrio succinogenes) protein is Large ribosomal subunit protein uL18.